A 528-amino-acid polypeptide reads, in one-letter code: Alpha-amylase (528 aa).

The signal sequence occupies residues 1 to 28 (MNKKWLNIPALIALLAAIAFGSVAPAEA). Ca(2+) contacts are provided by Asn168 and Asp228. The Nucleophile role is filled by Asp258. His262 contacts Ca(2+). The Proton donor role is filled by Glu286.

This sequence belongs to the glycosyl hydrolase 13 family. In terms of assembly, monomer. Ca(2+) is required as a cofactor.

The catalysed reaction is Endohydrolysis of (1-&gt;4)-alpha-D-glucosidic linkages in polysaccharides containing three or more (1-&gt;4)-alpha-linked D-glucose units.. The sequence is that of Alpha-amylase from Niallia circulans (Bacillus circulans).